Consider the following 309-residue polypeptide: Sulfate adenylyltransferase subunit 2 (309 aa).

The protein belongs to the PAPS reductase family. CysD subfamily. In terms of assembly, heterodimer composed of CysD, the smaller subunit, and CysN.

The catalysed reaction is sulfate + ATP + H(+) = adenosine 5'-phosphosulfate + diphosphate. The protein operates within sulfur metabolism; hydrogen sulfide biosynthesis; sulfite from sulfate: step 1/3. Functionally, with CysN forms the ATP sulfurylase (ATPS) that catalyzes the adenylation of sulfate producing adenosine 5'-phosphosulfate (APS) and diphosphate, the first enzymatic step in sulfur assimilation pathway. APS synthesis involves the formation of a high-energy phosphoric-sulfuric acid anhydride bond driven by GTP hydrolysis by CysN coupled to ATP hydrolysis by CysD. The polypeptide is Sulfate adenylyltransferase subunit 2 (Mycolicibacterium vanbaalenii (strain DSM 7251 / JCM 13017 / BCRC 16820 / KCTC 9966 / NRRL B-24157 / PYR-1) (Mycobacterium vanbaalenii)).